A 946-amino-acid polypeptide reads, in one-letter code: Villin-4 (946 aa).

Gelsolin-like repeat units lie at residues N28–K109, V152–K219, L274–F339, and E641–F715. Disordered stretches follow at residues A744 to R783 and T846 to D902. Positions Q765–H777 are enriched in polar residues. Positions S874 to N883 are enriched in acidic residues. One can recognise an HP domain in the interval D881–F946.

It belongs to the villin/gelsolin family.

The protein localises to the cytoplasm. The protein resides in the cytoskeleton. Ca(2+)-regulated actin-binding protein. Binds actin microfilaments (MFs). Involved in actin filament bundling, severing and capping. Caps the barbed end of actin filaments and is able to sever them in a calcium-dependent manner. In Oryza sativa subsp. indica (Rice), this protein is Villin-4.